An 890-amino-acid polypeptide reads, in one-letter code: Bacteriocin BCN5 (890 aa).

SH3b domains are found at residues 22–84 (PPNA…TNAT) and 179–241 (ENNA…TNAT). Residues 303-549 (GYVKYEGAAA…RYLQKIINAV (247 aa)) form the Peptidase M14 domain. Zn(2+) is bound by residues histidine 358, glutamate 361, and histidine 475. Glutamate 525 (proton donor/acceptor) is an active-site residue. Residues 572 to 636 (EATGEVINVQ…VNSGYIIILK (65 aa)) form the SH3b 3 domain. Residues 815–869 (KALAAAVIVNGVETMFCAFLGGFIAQCIAPEFPIVAAVAGAIVSAIAAFAIGYFV) form a hydrophobic region.

It depends on Zn(2+) as a cofactor.

Functionally, may function as an ionophore. In Clostridium perfringens, this protein is Bacteriocin BCN5 (bcn).